We begin with the raw amino-acid sequence, 382 residues long: Osmoprotectant import ATP-binding protein OsmV (382 aa).

The ABC transporter domain occupies 2 to 241; that stretch reads IKLENLTKQF…PANEFVGSFV (240 aa). 39–46 provides a ligand contact to ATP; the sequence is GPSGCGKT. CBS domains lie at 258–320 and 322–373; these read VTDQ…THPF and ITGK…GRTR.

Belongs to the ABC transporter superfamily. The complex is composed of two ATP-binding proteins (OsmV), two transmembrane proteins (OsmW and OsmY) and a solute-binding protein (OsmX).

It is found in the cell inner membrane. Part of the OsmU ABC transporter complex, which is involved in the uptake of osmoprotectants such as choline-O-sulfate and glycine betaine. Probably responsible for energy coupling to the transport system. The sequence is that of Osmoprotectant import ATP-binding protein OsmV (osmV) from Salmonella typhimurium (strain LT2 / SGSC1412 / ATCC 700720).